The chain runs to 284 residues: Nucleotide-binding protein NMC0691 (284 aa).

8–15 is a binding site for ATP; the sequence is GLSGSGKS. 58–61 is a binding site for GTP; sequence DVRS.

This sequence belongs to the RapZ-like family.

Its function is as follows. Displays ATPase and GTPase activities. The polypeptide is Nucleotide-binding protein NMC0691 (Neisseria meningitidis serogroup C / serotype 2a (strain ATCC 700532 / DSM 15464 / FAM18)).